Consider the following 52-residue polypeptide: Photosystem II reaction center protein M (52 aa).

A helical transmembrane segment spans residues 6 to 26 (FGFAASLLFVGVPTIFLIGLF). Residues 31-52 (DGEKSSFYSDTSKGRLSPEPKK) are disordered. Residues 42 to 52 (SKGRLSPEPKK) are compositionally biased toward basic and acidic residues.

The protein belongs to the PsbM family. PSII is composed of 1 copy each of membrane proteins PsbA, PsbB, PsbC, PsbD, PsbE, PsbF, PsbH, PsbI, PsbJ, PsbK, PsbL, PsbM, PsbT, PsbX, PsbY, Psb30/Ycf12, peripheral proteins PsbO, CyanoQ (PsbQ), PsbU, PsbV and a large number of cofactors. It forms dimeric complexes.

It is found in the cellular thylakoid membrane. Its function is as follows. One of the components of the core complex of photosystem II (PSII). PSII is a light-driven water:plastoquinone oxidoreductase that uses light energy to abstract electrons from H(2)O, generating O(2) and a proton gradient subsequently used for ATP formation. It consists of a core antenna complex that captures photons, and an electron transfer chain that converts photonic excitation into a charge separation. This subunit is found at the monomer-monomer interface. The polypeptide is Photosystem II reaction center protein M (Prochlorococcus marinus (strain NATL1A)).